The following is a 265-amino-acid chain: UPF0354 protein GTNG_2723 (265 aa).

Belongs to the UPF0354 family.

The protein is UPF0354 protein GTNG_2723 of Geobacillus thermodenitrificans (strain NG80-2).